The primary structure comprises 190 residues: Lipid A 1-phosphatase (190 aa).

The next 5 helical transmembrane spans lie at 22–42 (LLALSLGLILLGIFAPFPKVP), 60–80 (FIPTILSVAIPLIQRDAVGLF), 117–137 (GNFNMPSGHSSMVGLAVAFLM), 145–162 (YFWLLPLVPLTMLARIYL), and 164–184 (MHTIGAVLTGLGVGMLCVSLF).

The protein belongs to the lipid A LpxE 1-phosphatase family. The cofactor is Does not require divalent cations..

It localises to the cell inner membrane. It functions in the pathway bacterial outer membrane biogenesis; LPS lipid A biosynthesis. In terms of biological role, removes the 1-phosphate group from tetra- and probably hexaacylated lipid A species, has no requirement for the Kdo moiety of lipid A. Has no 4'-phosphatase activity. Has no activity on phospholipids (phosphatidylglycerol, phosphatidylethanolamine or cardiolipin). This enzyme has to act before EptA can attach phosphoethanolamine to the 1-position of lipid A. Absence of the 1-phosphate group renders the bacteria partially resistant to host-derived cationic antimicrobial peptides (CAMP), allowing it to camouflage itself from the host innate immune response, and plays a role in the long-term colonization of the host's stomach. This Helicobacter pylori (strain ATCC 700392 / 26695) (Campylobacter pylori) protein is Lipid A 1-phosphatase.